The primary structure comprises 86 residues: Small ribosomal subunit protein bS20 (86 aa).

This sequence belongs to the bacterial ribosomal protein bS20 family.

Its function is as follows. Binds directly to 16S ribosomal RNA. The polypeptide is Small ribosomal subunit protein bS20 (Arthrobacter sp. (strain FB24)).